A 312-amino-acid polypeptide reads, in one-letter code: Aldehyde reductase YPR1 (312 aa).

Tyr56 acts as the Proton donor in catalysis. Substrate is bound at residue His112. 220 to 274 (SPFGSANAPLLKEQAIIDMAKKHGVEPAQLIISWSIQRGYVVLAKSVNPERIVSN) lines the NADP(+) pocket.

It belongs to the aldo/keto reductase family.

Its subcellular location is the cytoplasm. The enzyme catalyses a primary alcohol + NADP(+) = an aldehyde + NADPH + H(+). The catalysed reaction is 2-methylbutan-1-ol + NADP(+) = 2-methylbutanal + NADPH + H(+). It catalyses the reaction hexan-1-ol + NADP(+) = hexanal + NADPH + H(+). Its function is as follows. Aldehyde reductase with broad substrate specificity, catalyzing the NADPH-dependent reduction of aldehydes into the corresponding alcohols. In vitro, displays high specific activity towards 2-methylbutanal (2-methylbutyraldehyde), as well as other aldehydes such as hexanal (a toxic lipid peroxidation product and phytoalexin), but exhibits extremely low activity as a glycerol dehydrogenase. Seems to contribute to 2-methylbutanal reduction in vivo, and may therefore play a role in isoleucine catabolism and fusel alcohol formation. The chain is Aldehyde reductase YPR1 (YPR1) from Saccharomyces cerevisiae (strain ATCC 204508 / S288c) (Baker's yeast).